The primary structure comprises 923 residues: Tyrosine-protein kinase receptor torso (923 aa).

A signal peptide spans 1–20 (MLIFYAKYAFIFWFFVGSNQ). The Extracellular portion of the chain corresponds to 21–399 (GEMLLMDKIS…VLLSEGNMVK (379 aa)). Asn-37, Asn-63, Asn-107, Asn-142, Asn-146, Asn-287, Asn-298, Asn-314, Asn-326, Asn-342, Asn-348, and Asn-377 each carry an N-linked (GlcNAc...) asparagine glycan. Residues 400-420 (LVLFIIVPICCILMLCSLTFC) traverse the membrane as a helical segment. Residues 421 to 923 (RRNRSEVQAL…EEELYLEPLN (503 aa)) lie on the Cytoplasmic side of the membrane. The 400-residue stretch at 475–874 (VLLQDVLGEG…TFSALKHRLG (400 aa)) folds into the Protein kinase domain. Residues 481-489 (LGEGAFGLV) and Lys-502 contribute to the ATP site. Ser-608 bears the Phosphoserine mark. Positions 656 to 687 (YIPKTAEAPKDRPKRKLKPQPKKDSKQDFKSD) are disordered. Over residues 676-687 (PKKDSKQDFKSD) the composition is skewed to basic and acidic residues. Asp-741 functions as the Proton acceptor in the catalytic mechanism.

It belongs to the protein kinase superfamily. Tyr protein kinase family. The cofactor is Mg(2+). May be auto-phosphorylated on tyrosine residues.

It is found in the membrane. The catalysed reaction is L-tyrosyl-[protein] + ATP = O-phospho-L-tyrosyl-[protein] + ADP + H(+). In terms of biological role, probable receptor tyrosine kinase which is required for determination of anterior and posterior terminal structures in the embryo. During postembryonic development, involved in the initiation of metamorphosis probably by inducing the production of ecdysone in response to prothoracicotropic hormone Ptth. Binding to Ptth stimulates activation of canonical MAPK signaling leading to ERK phosphorylation. The protein is Tyrosine-protein kinase receptor torso (tor) of Drosophila melanogaster (Fruit fly).